The chain runs to 336 residues: Phosphate acyltransferase (336 aa).

Belongs to the PlsX family. Homodimer. Probably interacts with PlsY.

It is found in the cytoplasm. It carries out the reaction a fatty acyl-[ACP] + phosphate = an acyl phosphate + holo-[ACP]. Its pathway is lipid metabolism; phospholipid metabolism. In terms of biological role, catalyzes the reversible formation of acyl-phosphate (acyl-PO(4)) from acyl-[acyl-carrier-protein] (acyl-ACP). This enzyme utilizes acyl-ACP as fatty acyl donor, but not acyl-CoA. The sequence is that of Phosphate acyltransferase from Pseudomonas putida (strain ATCC 47054 / DSM 6125 / CFBP 8728 / NCIMB 11950 / KT2440).